The sequence spans 297 residues: Quinate/shikimate dehydrogenase (297 aa).

Substrate contacts are provided by Lys80 and Asp116. NAD(+) is bound by residues 141–144 (AGGA), 164–167 (NRRD), Lys214, 241–244 (CVYN), and Gly264.

This sequence belongs to the shikimate dehydrogenase family. In terms of assembly, homodimer.

The catalysed reaction is L-quinate + NAD(+) = 3-dehydroquinate + NADH + H(+). The enzyme catalyses L-quinate + NADP(+) = 3-dehydroquinate + NADPH + H(+). It carries out the reaction shikimate + NADP(+) = 3-dehydroshikimate + NADPH + H(+). It catalyses the reaction shikimate + NAD(+) = 3-dehydroshikimate + NADH + H(+). Its pathway is metabolic intermediate biosynthesis; chorismate biosynthesis; chorismate from D-erythrose 4-phosphate and phosphoenolpyruvate: step 4/7. Its function is as follows. The actual biological function of YdiB remains unclear, nor is it known whether 3-dehydroshikimate or quinate represents the natural substrate. Catalyzes the reversible NAD-dependent reduction of both 3-dehydroshikimate (DHSA) and 3-dehydroquinate to yield shikimate (SA) and quinate, respectively. It can use both NAD or NADP for catalysis, however it has higher catalytic efficiency with NAD. The polypeptide is Quinate/shikimate dehydrogenase (Shigella dysenteriae serotype 1 (strain Sd197)).